The sequence spans 1383 residues: MAQTLAMTSQFNGRKRVRKFFGKIPEVAEMPNLIEVQKASYDQFLMIEEPKGGRPDEGLQAVFKSVFPISDFSGTAMLEFVGYQFDSPKFDVEECRQRDLTYAAPLKVILRLIVFDVDEDTGSKDIKDIKEQGVYMGDMPLMTTNGTFIVNGTERVIVSQMHRSPGVFFDHDKGKSHSSGKFLFAARVIPYRGSWLDIEFDAKDIIYARIDRRRKIPVTSLLMALGMDASDILSTFYNKVTYERDGDGWRIPYSVDRFKGMKLVSDLIDADSGEVVAEAGKKLTVRAAKALAEKGLKAVKVSEDDLLGSYLAEDIVNYQTGEIYLEAGDEIDEKTLRVLFDVNADQIDILDIDHMNIGAYIRNTLKVDKNESRQDALFDIYRVMRPGEPPTMDTAEAMFHSLFFDPERYDLSAVGRVKMNLRMDLDCPDTVRVLRQEDILAVVKMLVELRDGRGEIDDIDNLGNRRVRSVGELMENQYRIGLLRMERAIKERMSSVEIDTVMPQDLINAKPAAAAVREFFGSSQLSQFMDQTNPLSEITHKRRLSALGPGGLTRERAGFEVRDVHPTHYGRICPIETPEGPNIGLINSLATFARVNKYGFIESPYRKIIDGKVTTEVIYLSAMEESKHYVAQANSSLDAEGRLSEEFVVCRHAGEVLMAPRDHVDLMDVSPKQLVSVAAALIPFLENDDANRALMGSNMQRQAVPLVRAEAPFVGTGMESIVARDSGAAVAARRSGIVDQVDATRIVIRATEDLDPSKSGVDIYRLQKFQRSNQSTCINQRPLVHVGDRVEKGNIIADGPSTDLGDLALGRNVLVAFMPWNGYNYEDSILLSERIVADDVFTSIHIEEFEVAARDTKLGPEEITRDIPNVAEEALRNLDEAGIIYIGAEVQPGDILVGKITPKGESPMTPEEKLLRAIFGEKASDVRDTSMRMPPGAFGTVVEVRVFNRHGVEKDERAMAIEREEIERLAKDRDDEQSILDRNVYARLTDMLVGKVAVEGPKGFSKNKKLDTTIMGHYPRSQWWQFTVEDEKLQNEIEALRNQYDESKEALQRRFMDKVEKVQRGDEMPPGVMKMVKVFVAVKRKIQPGDKMAGRHGNKGVVSRILPIEDMPFLEDGTHADIVLNPLGVPSRMNVGQILETHLGWACAGMGKKIGDLVDLYQETGDILPLRQRIENLMPDDDHNEPVRQYDNESLYKLALQMRKGVSIATPVFDGAHEADINMMLEDAGLDSSGQVTLYDGRTGEPFDRPVTVGYIYMLKLHHLVDDKIHARSIGPYSLVTQQPLGGKAQFGGQRFGEMEVWALEAYGAAYTLQEMLTVKSDDVAGRTKVYEAIVRGDDTFEAGIPESFNVLVKEMRSLALNVELDDARELIAQRALSDTTEQ.

Belongs to the RNA polymerase beta chain family. As to quaternary structure, the RNAP catalytic core consists of 2 alpha, 1 beta, 1 beta' and 1 omega subunit. When a sigma factor is associated with the core the holoenzyme is formed, which can initiate transcription.

The enzyme catalyses RNA(n) + a ribonucleoside 5'-triphosphate = RNA(n+1) + diphosphate. Its function is as follows. DNA-dependent RNA polymerase catalyzes the transcription of DNA into RNA using the four ribonucleoside triphosphates as substrates. This is DNA-directed RNA polymerase subunit beta from Bartonella henselae (strain ATCC 49882 / DSM 28221 / CCUG 30454 / Houston 1) (Rochalimaea henselae).